We begin with the raw amino-acid sequence, 455 residues long: Probable glucarate dehydratase (455 aa).

Substrate-binding residues include His42, Thr113, Tyr160, and Lys215. The Proton acceptor role is filled by Lys217. Residues Asp245, Glu276, and Asn299 each coordinate Mg(2+). Residue 245–247 (DPN) participates in substrate binding. Residues Asn299, 349-351 (HSN), His378, and Arg431 each bind substrate. His349 acts as the Proton acceptor in catalysis.

It belongs to the mandelate racemase/muconate lactonizing enzyme family. GlucD subfamily. It depends on Mg(2+) as a cofactor.

The catalysed reaction is D-glucarate = 5-dehydro-4-deoxy-D-glucarate + H2O. Its pathway is carbohydrate acid metabolism; D-glucarate degradation; 2,5-dioxopentanoate from D-glucarate: step 1/2. Functionally, catalyzes the dehydration of glucarate to 5-keto-4-deoxy-D-glucarate (5-kdGluc). In Bacillus subtilis (strain 168), this protein is Probable glucarate dehydratase (gudD).